Reading from the N-terminus, the 168-residue chain is DNA damage-inducible transcript 3 protein (168 aa).

The interval 10–18 is interaction with TRIB3; it reads FETVSSWEL. The N-terminal stretch occupies residues 10-26; the sequence is FETVSSWELEAWYEDLQ. Serine 14, serine 15, serine 30, and serine 31 each carry phosphoserine; by CK2. The tract at residues 34–130 is disordered; sequence IGGTYISSPG…EKEQENERKV (97 aa). The span at 73-88 shows a compositional bias: low complexity; the sequence is TSTSQSPRSPDSSQSS. Phosphoserine; by MAPK14 occurs at positions 78 and 81. Positions 98–161 constitute a bZIP domain; sequence QGRTRKRKQS…ETTRRALIDR (64 aa). Positions 100 to 129 are basic motif; that stretch reads RTRKRKQSGQCAARAGKQRMKEKEQENERK. Positions 118–130 are enriched in basic and acidic residues; the sequence is RMKEKEQENERKV. Residues 133–147 are leucine-zipper; sequence LAEENERLKLEIERL.

Belongs to the bZIP family. Heterodimer. Interacts with TCF7L2/TCF4, EP300/P300, HDAC1, HDAC5 and HDAC6. Interacts with TRIB3 which blocks its association with EP300/P300. Interacts with FOXO3, CEBPB and ATF4. Ubiquitinated, leading to its degradation by the proteasome. Post-translationally, phosphorylation at serine residues by MAPK14 enhances its transcriptional activation activity while phosphorylation at serine residues by CK2 inhibits its transcriptional activation activity.

Its subcellular location is the cytoplasm. It localises to the nucleus. Its function is as follows. Multifunctional transcription factor in ER stress response. Plays an essential role in the response to a wide variety of cell stresses and induces cell cycle arrest and apoptosis in response to ER stress. Plays a dual role both as an inhibitor of CCAAT/enhancer-binding protein (C/EBP) function and as an activator of other genes. Acts as a dominant-negative regulator of C/EBP-induced transcription: dimerizes with members of the C/EBP family, impairs their association with C/EBP binding sites in the promoter regions, and inhibits the expression of C/EBP regulated genes. Positively regulates the transcription of TRIB3, IL6, IL8, IL23, TNFRSF10B/DR5, PPP1R15A/GADD34, BBC3/PUMA, BCL2L11/BIM and ERO1L. Negatively regulates; expression of BCL2 and MYOD1, ATF4-dependent transcriptional activation of asparagine synthetase (ASNS), CEBPA-dependent transcriptional activation of hepcidin (HAMP) and CEBPB-mediated expression of peroxisome proliferator-activated receptor gamma (PPARG). Inhibits the canonical Wnt signaling pathway by binding to TCF7L2/TCF4, impairing its DNA-binding properties and repressing its transcriptional activity. Plays a regulatory role in the inflammatory response through the induction of caspase-11 (CASP4/CASP11) which induces the activation of caspase-1 (CASP1) and both these caspases increase the activation of pro-IL1B to mature IL1B which is involved in the inflammatory response. Acts as a major regulator of postnatal neovascularization through regulation of endothelial nitric oxide synthase (NOS3)-related signaling. The sequence is that of DNA damage-inducible transcript 3 protein (Ddit3) from Rattus norvegicus (Rat).